A 397-amino-acid chain; its full sequence is NADH-quinone oxidoreductase subunit H (397 aa).

The next 9 helical transmembrane spans lie at A7–A27, L78–I98, I120–A140, M164–V184, W195–V215, M247–G267, S283–V303, L322–P342, and W353–V373.

It belongs to the complex I subunit 1 family. In terms of assembly, NDH-1 is composed of 15 different subunits. Subunits NuoA, H, J, K, L, M, N constitute the membrane sector of the complex.

The protein localises to the cell membrane. It carries out the reaction a quinone + NADH + 5 H(+)(in) = a quinol + NAD(+) + 4 H(+)(out). Functionally, NDH-1 shuttles electrons from NADH, via FMN and iron-sulfur (Fe-S) centers, to quinones in the respiratory chain. The immediate electron acceptor for the enzyme in this species is believed to be ubiquinone. Couples the redox reaction to proton translocation (for every two electrons transferred, four hydrogen ions are translocated across the cytoplasmic membrane), and thus conserves the redox energy in a proton gradient. This subunit may bind ubiquinone. This is NADH-quinone oxidoreductase subunit H from Deinococcus radiodurans (strain ATCC 13939 / DSM 20539 / JCM 16871 / CCUG 27074 / LMG 4051 / NBRC 15346 / NCIMB 9279 / VKM B-1422 / R1).